A 189-amino-acid polypeptide reads, in one-letter code: Probable nicotinate-nucleotide adenylyltransferase (189 aa).

This sequence belongs to the NadD family.

The catalysed reaction is nicotinate beta-D-ribonucleotide + ATP + H(+) = deamido-NAD(+) + diphosphate. The protein operates within cofactor biosynthesis; NAD(+) biosynthesis; deamido-NAD(+) from nicotinate D-ribonucleotide: step 1/1. Catalyzes the reversible adenylation of nicotinate mononucleotide (NaMN) to nicotinic acid adenine dinucleotide (NaAD). This chain is Probable nicotinate-nucleotide adenylyltransferase, found in Bacillus cereus (strain AH820).